Consider the following 849-residue polypeptide: Cytosolic phospholipase A2 zeta (849 aa).

The C2 domain occupies 27–145; the sequence is EKRGPLWRHW…KCGQPHKHTF (119 aa). The Ca(2+) site is built by Asp-60, Asp-66, Asp-116, Asp-118, and Asp-123. In terms of domain architecture, PLA2c spans 306 to 849; it reads EMSSGDLDLR…RHQARERAGA (544 aa). The active-site Nucleophile is Ser-395. Asp-680 (proton acceptor) is an active-site residue.

Ca(2+) serves as cofactor. As to expression, expressed in myocardium (at protein level).

Its subcellular location is the cytoplasm. The protein localises to the cytosol. It is found in the cell membrane. It localises to the mitochondrion. It catalyses the reaction a 1,2-diacyl-sn-glycero-3-phosphocholine + H2O = a 1-acyl-sn-glycero-3-phosphocholine + a fatty acid + H(+). The enzyme catalyses a 1-O-alkyl-2-acyl-sn-glycero-3-phosphocholine + H2O = a 1-O-alkyl-sn-glycero-3-phosphocholine + a fatty acid + H(+). It carries out the reaction 1-hexadecanoyl-2-(9Z-octadecenoyl)-sn-glycero-3-phosphocholine + H2O = 2-(9Z-octadecenoyl)-sn-glycero-3-phosphocholine + hexadecanoate + H(+). The catalysed reaction is 1-hexadecanoyl-2-(9Z,12Z-octadecadienoyl)-sn-glycero-3-phosphocholine + H2O = (9Z,12Z)-octadecadienoate + 1-hexadecanoyl-sn-glycero-3-phosphocholine + H(+). It catalyses the reaction 1-hexadecanoyl-2-(5Z,8Z,11Z,14Z-eicosatetraenoyl)-sn-glycero-3-phosphocholine + H2O = 1-hexadecanoyl-sn-glycero-3-phosphocholine + (5Z,8Z,11Z,14Z)-eicosatetraenoate + H(+). The enzyme catalyses 1-hexadecanoyl-2-(9Z,12Z-octadecadienoyl)-sn-glycero-3-phosphoethanolamine + H2O = 1-hexadecanoyl-sn-glycero-3-phosphoethanolamine + (9Z,12Z)-octadecadienoate + H(+). It carries out the reaction 1-hexadecanoyl-2-(5Z,8Z,11Z,14Z-eicosatetraenoyl)-sn-glycero-3-phosphoethanolamine + H2O = 1-hexadecanoyl-sn-glycero-3-phosphoethanolamine + (5Z,8Z,11Z,14Z)-eicosatetraenoate + H(+). The catalysed reaction is 1-(5Z,8Z,11Z,14Z-eicosatetraenoyl)-2-O-hexadecyl-sn-glycero-3-phosphocholine + H2O = 2-O-hexadecyl-sn-glycero-3-phosphocholine + (5Z,8Z,11Z,14Z)-eicosatetraenoate + H(+). It catalyses the reaction 1-O-hexadecyl-2-(5Z,8Z,11Z,14Z)-eicosatetraenoyl-sn-glycero-3-phosphocholine + H2O = 1-O-hexadecyl-sn-glycero-3-phosphocholine + (5Z,8Z,11Z,14Z)-eicosatetraenoate + H(+). The enzyme catalyses 1-hexadecanoyl-sn-glycero-3-phosphocholine + H2O = sn-glycerol 3-phosphocholine + hexadecanoate + H(+). Its activity is regulated as follows. Stimulated by cytosolic Ca(2+). In terms of biological role, has calcium-dependent phospholipase and lysophospholipase activities with a potential role in membrane lipid remodeling and biosynthesis of lipid mediators. Preferentially hydrolyzes the ester bond of the fatty acyl group attached at sn-2 position of phospholipids (phospholipase A2 activity). Selectively hydrolyzes sn-2 arachidonoyl group from membrane phospholipids, providing the precursor for eicosanoid biosynthesis. In myocardial mitochondria, plays a major role in arachidonate release that is metabolically channeled to the formation of cardioprotective eicosanoids, epoxyeicosatrienoates (EETs). The sequence is that of Cytosolic phospholipase A2 zeta (PLA2G4F) from Homo sapiens (Human).